Here is a 672-residue protein sequence, read N- to C-terminus: COBRA-like protein 10 (672 aa).

The signal sequence occupies residues 1–35 (MRAIDVKTGMKIPWDVRYSLSLFIFLSSILFLSNG). N-linked (GlcNAc...) asparagine glycans are attached at residues Asn79, Asn135, Asn264, Asn328, Asn339, Asn368, Asn422, Asn442, Asn483, Asn562, Asn570, and Asn589. In terms of domain architecture, CBM2 spans 502–607 (KLPCPDNCGV…PVPGKQQSVI (106 aa)). Ser646 carries GPI-anchor amidated serine lipidation. A propeptide spans 647–672 (SGHRRGISVSMSFVFATIAAFALMMD) (removed in mature form). Positions 664–672 (IAAFALMMD) match the Required for processing by the PIG complex, a critical step for apical plasma membrane localization in pollen tubes motif.

It belongs to the COBRA family. In terms of processing, the GPI-anchor attachment at Ser-646 requires APTG1. Expressed in roots, stems, leaves, flowers and siliques. Specific expression in the pollen tube.

The protein localises to the cell membrane. It localises to the cytoplasm. The protein resides in the vesicle. Functionally, involved in the deposition of apical pectin cap and cellulose microfibrils in pollen tubes. Not essential for pollen development, hydration or germination, but required for pollen tubes growth in the female transmitting tract of pistil and toward micropyles, via the perception of ovule guidance cues. The chain is COBRA-like protein 10 from Arabidopsis thaliana (Mouse-ear cress).